Reading from the N-terminus, the 289-residue chain is Mitochondrial fission regulator 1-like (289 aa).

Position 27 is a phosphothreonine (threonine 27). A Phosphoserine modification is found at serine 38. At serine 100 the chain carries Phosphoserine; by AMPK. Residues serine 107, serine 221, and serine 222 each carry the phosphoserine modification. Phosphoserine; by AMPK is present on serine 235. Phosphoserine is present on residues serine 258 and serine 270.

This sequence belongs to the MTFR1 family. Post-translationally, phosphorylated by AMPK. Upon stress, phosphorylation at Ser-100 and Ser-235 by AMPK is sufficient to induce mitochondrial fragmentation.

It is found in the mitochondrion outer membrane. Functionally, mitochondrial protein required for adaptation of miochondrial dynamics to metabolic changes. Regulates mitochondrial morphology at steady state and mediates AMPK-dependent stress-induced mitochondrial fragmentation via the control of OPA1 levels. In Mus musculus (Mouse), this protein is Mitochondrial fission regulator 1-like (Mtfr1l).